Consider the following 240-residue polypeptide: Lipoprotein-releasing system ATP-binding protein LolD (240 aa).

Residues 15-240 enclose the ABC transporter domain; the sequence is IRAESLGKTY…GLRELTSAEV (226 aa). 51 to 58 provides a ligand contact to ATP; that stretch reads GASGAGKS.

The protein belongs to the ABC transporter superfamily. Lipoprotein translocase (TC 3.A.1.125) family. In terms of assembly, the complex is composed of two ATP-binding proteins (LolD) and two transmembrane proteins (LolC and LolE).

It localises to the cell inner membrane. In terms of biological role, part of the ABC transporter complex LolCDE involved in the translocation of mature outer membrane-directed lipoproteins, from the inner membrane to the periplasmic chaperone, LolA. Responsible for the formation of the LolA-lipoprotein complex in an ATP-dependent manner. The protein is Lipoprotein-releasing system ATP-binding protein LolD of Xylella fastidiosa (strain Temecula1 / ATCC 700964).